Here is a 1173-residue protein sequence, read N- to C-terminus: BRCA2-interacting transcriptional repressor EMSY (1173 aa).

Residues 16–100 enclose the ENT domain; sequence CKRILRKLEL…EWSIEGRRLV (85 aa). Residues 149–177 show a composition bias toward low complexity; sequence STTSTPPSASAPSSSSAAVKSPRPASPAS. 7 disordered regions span residues 149–179, 191–216, 676–720, 797–816, 905–998, 1020–1046, and 1139–1173; these read STTS…ASNV, KSVS…SSPV, NRSA…DAPP, SAEQ…ESDA, RVCE…GAQV, PRAP…EKPS, and DYTS…DQSQ. The segment covering 683–693 has biased composition (low complexity); the sequence is TTSTHTSAAAA. 2 stretches are compositionally biased toward low complexity: residues 911 to 921 and 937 to 953; these read SSSSSSSSSSS and SSSS…TPHT. Polar residues-rich tracts occupy residues 961–976 and 989–998; these read QAPT…TQLS and SSKTSSGAQV. Low complexity predominate over residues 1025–1040; sequence SSSSSSEAALKLQAES. Acidic residues predominate over residues 1148 to 1159; sequence EQAMEQEVDSSN.

In terms of assembly, homodimer.

The protein resides in the nucleus. Functionally, regulator which is able to repress transcription, possibly via its interaction with a multiprotein chromatin remodeling complex that modifies the chromatin. The polypeptide is BRCA2-interacting transcriptional repressor EMSY (Danio rerio (Zebrafish)).